Here is a 306-residue protein sequence, read N- to C-terminus: MENRLNYYKIERDEWSNFYQEHIVPLTEEELLNLKSLNDQISLKDVQDIYMPLVHLLRIHLDSHQELQDSQSEFLGVKAQKVPFILGIAGSVAVGKSTTARLLQSLLSEVYPDKKVQLITTDGFLYPNQELKRRNLMERKGFPESYDMRRLLRFVNDVKNNLPAKAPVYSHKVYDIVKGQYEIVESPDILIVEGINVLQLPTNQQIYVSDFFDFSIYVDAEESLIEEWYLERFETLLDTAFKDPTNYYYPYAIGDRKQAIKMAKNIWKTINLKNLREFILPTRNRADLIMHKTNNHVVNELFLRKY.

An ATP-binding site is contributed by 90-97 (GSVAVGKS).

This sequence belongs to the prokaryotic pantothenate kinase family.

It localises to the cytoplasm. It catalyses the reaction (R)-pantothenate + ATP = (R)-4'-phosphopantothenate + ADP + H(+). It functions in the pathway cofactor biosynthesis; coenzyme A biosynthesis; CoA from (R)-pantothenate: step 1/5. This is Pantothenate kinase from Ligilactobacillus salivarius (strain UCC118) (Lactobacillus salivarius).